The primary structure comprises 333 residues: uncharacterized protein (333 aa).

A disordered region spans residues Pro-234–Asp-333. Pro residues predominate over residues Val-251–Glu-265. Residues Gly-324 to Asp-333 are compositionally biased toward polar residues.

Its subcellular location is the cell projection. The protein localises to the cilium. It localises to the flagellum. This is an uncharacterized protein from Homo sapiens (Human).